The primary structure comprises 282 residues: Glycine/sarcosine N-methyltransferase (282 aa).

The span at methionine 1–glutamate 23 shows a compositional bias: polar residues. The interval methionine 1–glutamate 27 is disordered. S-adenosyl-L-methionine-binding positions include tyrosine 35, tryptophan 43, arginine 52, alanine 76, aspartate 97, aspartate 123–tryptophan 124, and leucine 141. The substrate site is built by asparagine 143, arginine 176, and tyrosine 217.

The protein belongs to the class I-like SAM-binding methyltransferase superfamily. Glycine N-methyltransferase family. In terms of assembly, monomer.

The catalysed reaction is glycine + 2 S-adenosyl-L-methionine = N,N-dimethylglycine + 2 S-adenosyl-L-homocysteine + 2 H(+). It carries out the reaction glycine + S-adenosyl-L-methionine = sarcosine + S-adenosyl-L-homocysteine + H(+). It catalyses the reaction sarcosine + S-adenosyl-L-methionine = N,N-dimethylglycine + S-adenosyl-L-homocysteine + H(+). The protein operates within amine and polyamine biosynthesis; betaine biosynthesis via glycine pathway; betaine from glycine: step 1/3. It participates in amine and polyamine biosynthesis; betaine biosynthesis via glycine pathway; betaine from glycine: step 2/3. Catalyzes the methylation of glycine and sarcosine to sarcosine and dimethylglycine, respectively, with S-adenosylmethionine (AdoMet) acting as the methyl donor. It has strict specificity for glycine and sarcosine as the methyl group acceptors. The polypeptide is Glycine/sarcosine N-methyltransferase (Parasynechococcus marenigrum (strain WH8102)).